Here is a 541-residue protein sequence, read N- to C-terminus: MLRLARFYSLARTKAIHSHGAPFRPEYALKCGLEIHTQLNTKNKLFSQSTNSATSLVDAPNHHTSYYDIALPGTQPVLNLEAILFAMKLSLALGSQVNSISQFDRKHYFYGDQPQGYQLTQHYRPFARGGKINLSKELDDIDESAKEIGILQLQIEQDTGKSHYTETDKDVITLVDLNRSNVPLIELVTKPDFSDIKQVRAFIKKYQNLVRHLHISSGDLETGAMRVDVNLSINEYARVELKNLPNTSSIINAIKYEYQRQVELISVGDTSSLMEPETRGWTGSSTVKLRSKETTIDYRYMPDPELPYINLAPDVISGVRGLMPQLPDDIMRILMKKPYQLSLKDAKILTYNSNQNDMYNHEALRSYYLDTFREFSKLAGERSNAKLPTNWIIHEFLGDLNKLQIPLAKAKEILPPPVFAQFLKLLHEEVISATSGKMLLFHILENFEQSNCQDLSIPDFSKLIEKFELHAINQVDPQELMDLCNDVIAQHTDDTFIRNLVTGKKKSSLKFLIGQGMRRSQGRIKANEFEKKFKEILNIQW.

It belongs to the GatB/GatE family. GatB subfamily. Subunit of the heterotrimeric GatFAB amidotransferase (AdT) complex, composed of A (HER2), B (PET112) and F (YGR102C) subunits.

It localises to the mitochondrion. It catalyses the reaction L-glutamyl-tRNA(Gln) + L-glutamine + ATP + H2O = L-glutaminyl-tRNA(Gln) + L-glutamate + ADP + phosphate + H(+). Functionally, allows the formation of correctly charged Gln-tRNA(Gln) through the transamidation of misacylated Glu-tRNA(Gln) in the mitochondria. The reaction takes place in the presence of glutamine and ATP through an activated gamma-phospho-Glu-tRNA(Gln). This chain is Glutamyl-tRNA(Gln) amidotransferase subunit B, mitochondrial, found in Saccharomyces cerevisiae (strain ATCC 204508 / S288c) (Baker's yeast).